We begin with the raw amino-acid sequence, 520 residues long: GMP synthase [glutamine-hydrolyzing] (520 aa).

One can recognise a Glutamine amidotransferase type-1 domain in the interval 9 to 202 (TILIIDFGSQ…VHRIVGVKPG (194 aa)). Residue Cys86 is the Nucleophile of the active site. Residues His176 and Glu178 contribute to the active site. Positions 203–395 (WTMGAYREQA…LGLPDSFIGR (193 aa)) constitute a GMPS ATP-PPase domain. 230 to 236 (SGGVDSS) is a binding site for ATP.

In terms of assembly, homodimer.

It carries out the reaction XMP + L-glutamine + ATP + H2O = GMP + L-glutamate + AMP + diphosphate + 2 H(+). Its pathway is purine metabolism; GMP biosynthesis; GMP from XMP (L-Gln route): step 1/1. Its function is as follows. Catalyzes the synthesis of GMP from XMP. The protein is GMP synthase [glutamine-hydrolyzing] of Brucella ovis (strain ATCC 25840 / 63/290 / NCTC 10512).